Reading from the N-terminus, the 142-residue chain is SEPGRREGKRSYSMEHFRWGKPVGKKRRPVKVYPNGAEDESAEAFPLEFKRELAGERPEPALGPEGAAEGMAALADLEYGLVAKAEVAEKKDDGPYKMEHFRWGSPGKDKRYGGFMTSEKSQTPLVTLFKNAIIKNAHKKGQ.

Residues Ser1–Gly8 constitute a propeptide that is removed on maturation. Position 23 is a valine amide (Val23). At Ser41 the chain carries Phosphoserine.

The protein belongs to the POMC family. Post-translationally, specific enzymatic cleavages at paired basic residues yield the different active peptides. ACTH and MSH are produced by the pituitary gland.

Its subcellular location is the secreted. Functionally, stimulates the adrenal glands to release cortisol. Anorexigenic peptide. Increases the pigmentation of skin by increasing melanin production in melanocytes. Its function is as follows. Increases the pigmentation of skin by increasing melanin production in melanocytes. In terms of biological role, endogenous orexigenic opiate. Functionally, endogenous opiate. The protein is Pro-opiomelanocortin (POMC) of Neovison vison (American mink).